A 297-amino-acid polypeptide reads, in one-letter code: UTP--glucose-1-phosphate uridylyltransferase (297 aa).

The protein belongs to the UDPGP type 2 family.

The catalysed reaction is alpha-D-glucose 1-phosphate + UTP + H(+) = UDP-alpha-D-glucose + diphosphate. Its pathway is carbohydrate metabolism; nucleotide-sugar metabolism. The protein operates within bacterial outer membrane biogenesis; lipopolysaccharide biosynthesis. May play a role in stationary phase survival. The sequence is that of UTP--glucose-1-phosphate uridylyltransferase (galF) from Salmonella typhimurium (strain LT2 / SGSC1412 / ATCC 700720).